Here is a 400-residue protein sequence, read N- to C-terminus: Mu-type opioid receptor (400 aa).

The Extracellular portion of the chain corresponds to 1 to 68; the sequence is MDSSAAPTNA…CPPTGSPSMI (68 aa). N-linked (GlcNAc...) asparagine glycans are attached at residues asparagine 9, asparagine 12, asparagine 33, asparagine 40, and asparagine 48. A helical membrane pass occupies residues 69-93; sequence TAITIMALYSIVCVVGLFGNFLVMY. Over 94 to 106 the chain is Cytoplasmic; the sequence is VIVRYTKMKTATN. Residues 107–131 traverse the membrane as a helical segment; the sequence is IYIFNLALADALATSTLPFQSVNYL. At 132 to 142 the chain is on the extracellular side; the sequence is MGTWPFGTILC. Residues cysteine 142 and cysteine 219 are joined by a disulfide bond. The helical transmembrane segment at 143–165 threads the bilayer; sequence KIVISIDYYNMFTSIFTLCTMSV. Residues 166–185 lie on the Cytoplasmic side of the membrane; sequence DRYIAVCHPVKALDFRTPRN. Phosphotyrosine is present on tyrosine 168. Residues 186-207 traverse the membrane as a helical segment; sequence AKIINVCNWILSSAIGLPVMFM. Residues 208-230 are Extracellular-facing; that stretch reads ATTKYRQGSIDCTLTFSHPTWYW. A helical membrane pass occupies residues 231–255; that stretch reads ENLLKICVFIFAFIMPVLIITVCYG. Topologically, residues 256–279 are cytoplasmic; that stretch reads LMILRLKSVRMLSGSKEKDRNLRR. Residues 280 to 306 form a helical membrane-spanning segment; that stretch reads ITRMVLVVVAVFIVCWTPIHIYVIIKA. Over 307–314 the chain is Extracellular; it reads LVTIPETT. A helical membrane pass occupies residues 315–338; that stretch reads FQTVSWHFCIALGYTNSCLNPVLY. The NPxxY; plays a role in stabilizing the activated conformation of the receptor signature appears at 334 to 338; the sequence is NPVLY. The Cytoplasmic portion of the chain corresponds to 339 to 400; that stretch reads AFLDENFKRC…NLEAETAPLP (62 aa). Cysteine 353 carries the S-palmitoyl cysteine lipid modification. Serine 365 bears the Phosphoserine mark. Threonine 372 is subject to Phosphothreonine. Serine 377 bears the Phosphoserine mark. Threonine 396 is subject to Phosphothreonine.

It belongs to the G-protein coupled receptor 1 family. Forms homooligomers and heterooligomers with other GPCRs, such as OPRD1, OPRK1, OPRL1, NPFFR2, ADRA2A, SSTR2, CNR1 and CCR5 (probably in dimeric forms). Interacts with heterotrimeric G proteins; interaction with a heterotrimeric complex containing GNAI1, GNB1 and GNG2 stabilizes the active conformation of the receptor and increases its affinity for endomorphin-2, the synthetic opioid peptide DAMGO and for morphinan agonists. Interacts with PPL; the interaction disrupts agonist-mediated G-protein activation. Interacts (via C-terminus) with DNAJB4 (via C-terminus). Interacts with calmodulin; the interaction inhibits the constitutive activity of OPRM1; it abolishes basal and attenuates agonist-stimulated G-protein coupling. Interacts with FLNA, PLD2, RANBP9 and WLS and GPM6A. Interacts with RTP4. Interacts with SYP and GNAS. Interacts with RGS9, RGS17, RGS20, RGS4, PPP1R9B and HINT1. Phosphorylated. Differentially phosphorylated in basal and agonist-induced conditions. Agonist-mediated phosphorylation modulates receptor internalization. Phosphorylated by GRK2 in a agonist-dependent manner. Phosphorylation at Tyr-168 requires receptor activation, is dependent on non-receptor protein tyrosine kinase Src and results in a decrease in agonist efficacy by reducing G-protein coupling efficiency. Phosphorylated on tyrosine residues; the phosphorylation is involved in agonist-induced G-protein-independent receptor down-regulation. Phosphorylation at Ser-377 is involved in G-protein-dependent but not beta-arrestin-dependent activation of the ERK pathway. Post-translationally, ubiquitinated. A basal ubiquitination seems not to be related to degradation. Ubiquitination is increased upon formation of OPRM1:OPRD1 oligomers leading to proteasomal degradation; the ubiquitination is diminished by RTP4. Expressed in brain. Isoform 16 and isoform 17 are detected in brain.

It is found in the cell membrane. The protein resides in the cell projection. Its subcellular location is the axon. The protein localises to the perikaryon. It localises to the dendrite. It is found in the endosome. The protein resides in the cytoplasm. Its function is as follows. Receptor for endogenous opioids such as beta-endorphin and endomorphin. Receptor for natural and synthetic opioids including morphine, heroin, DAMGO, fentanyl, etorphine, buprenorphin and methadone. Also activated by enkephalin peptides, such as Met-enkephalin or Met-enkephalin-Arg-Phe, with higher affinity for Met-enkephalin-Arg-Phe. Agonist binding to the receptor induces coupling to an inactive GDP-bound heterotrimeric G-protein complex and subsequent exchange of GDP for GTP in the G-protein alpha subunit leading to dissociation of the G-protein complex with the free GTP-bound G-protein alpha and the G-protein beta-gamma dimer activating downstream cellular effectors. The agonist- and cell type-specific activity is predominantly coupled to pertussis toxin-sensitive G(i) and G(o) G alpha proteins, GNAI1, GNAI2, GNAI3 and GNAO1 isoforms Alpha-1 and Alpha-2, and to a lesser extent to pertussis toxin-insensitive G alpha proteins GNAZ and GNA15. They mediate an array of downstream cellular responses, including inhibition of adenylate cyclase activity and both N-type and L-type calcium channels, activation of inward rectifying potassium channels, mitogen-activated protein kinase (MAPK), phospholipase C (PLC), phosphoinositide/protein kinase (PKC), phosphoinositide 3-kinase (PI3K) and regulation of NF-kappa-B. Also couples to adenylate cyclase stimulatory G alpha proteins. The selective temporal coupling to G-proteins and subsequent signaling can be regulated by RGSZ proteins, such as RGS9, RGS17 and RGS4. Phosphorylation by members of the GPRK subfamily of Ser/Thr protein kinases and association with beta-arrestins is involved in short-term receptor desensitization. Beta-arrestins associate with the GPRK-phosphorylated receptor and uncouple it from the G-protein thus terminating signal transduction. The phosphorylated receptor is internalized through endocytosis via clathrin-coated pits which involves beta-arrestins. The activation of the ERK pathway occurs either in a G-protein-dependent or a beta-arrestin-dependent manner and is regulated by agonist-specific receptor phosphorylation. Acts as a class A G-protein coupled receptor (GPCR) which dissociates from beta-arrestin at or near the plasma membrane and undergoes rapid recycling. Receptor down-regulation pathways are varying with the agonist and occur dependent or independent of G-protein coupling. Endogenous ligands induce rapid desensitization, endocytosis and recycling. Heterooligomerization with other GPCRs can modulate agonist binding, signaling and trafficking properties. Couples to GNAS and is proposed to be involved in excitatory effects. Functionally, does not bind agonists but may act through oligomerization with binding-competent OPRM1 isoforms and reduce their ligand binding activity. The polypeptide is Mu-type opioid receptor (OPRM1) (Homo sapiens (Human)).